The chain runs to 173 residues: RNA pyrophosphohydrolase (173 aa).

In terms of domain architecture, Nudix hydrolase spans 11–164 (PYRKCVGILV…KKHVYTQVVK (154 aa)). A Nudix box motif is present at residues 52–73 (GGINQGEKPIDAARRELYEETG).

It belongs to the Nudix hydrolase family. RppH subfamily. It depends on a divalent metal cation as a cofactor.

Its function is as follows. Accelerates the degradation of transcripts by removing pyrophosphate from the 5'-end of triphosphorylated RNA, leading to a more labile monophosphorylated state that can stimulate subsequent ribonuclease cleavage. This Bartonella clarridgeiae protein is RNA pyrophosphohydrolase.